The sequence spans 296 residues: Iron(3+)-hydroxamate-binding protein FhuD (296 aa).

Residues 1–30 (MSGLPLISRRRLLTAMALSPLLWQMNTAHA) constitute a signal peptide (tat-type signal). In terms of domain architecture, Fe/B12 periplasmic-binding spans 37 to 296 (RIVALEWLPV…VLDNAIGGKA (260 aa)). Residues tryptophan 68, arginine 84, serine 103, tyrosine 106, phenylalanine 124, tryptophan 217, tryptophan 273, phenylalanine 274, and tyrosine 275 each coordinate Fe(III)-coprogen.

Belongs to the bacterial solute-binding protein 8 family. As to quaternary structure, the complex is composed of two ATP-binding proteins (FhuC), a transmembrane protein (FhuB) and a solute-binding protein (FhuD). FhuD interacts with FhuB. Substrate-loaded FhuD binds FhuB more strongly than FhuD alone. In terms of processing, exported by the Tat system. The position of the signal peptide cleavage has been experimentally proven. Can also be exported by the Sec system.

Its subcellular location is the periplasm. In terms of biological role, part of the ABC transporter complex FhuCDB involved in iron(3+)-hydroxamate import. Binds the iron(3+)-hydroxamate complex and transfers it to the membrane-bound permease. Required for the transport of all iron(3+)-hydroxamate siderophores such as ferrichrome, gallichrome, desferrioxamine, coprogen, aerobactin, shizokinen, rhodotorulic acid and the antibiotic albomycin. The protein is Iron(3+)-hydroxamate-binding protein FhuD (fhuD) of Escherichia coli (strain K12).